The sequence spans 385 residues: Acetate kinase (385 aa).

N9 serves as a coordination point for Mg(2+). ATP is bound at residue K16. A substrate-binding site is contributed by R87. D144 functions as the Proton donor/acceptor in the catalytic mechanism. ATP-binding positions include 202 to 206 and 277 to 279; these read HLGSG and DMR. E373 contributes to the Mg(2+) binding site.

Belongs to the acetokinase family. In terms of assembly, homodimer. Requires Mg(2+) as cofactor. The cofactor is Mn(2+).

It is found in the cytoplasm. The enzyme catalyses acetate + ATP = acetyl phosphate + ADP. It functions in the pathway metabolic intermediate biosynthesis; acetyl-CoA biosynthesis; acetyl-CoA from acetate: step 1/2. Catalyzes the formation of acetyl phosphate from acetate and ATP. Can also catalyze the reverse reaction. The chain is Acetate kinase from Rickettsia typhi (strain ATCC VR-144 / Wilmington).